The primary structure comprises 336 residues: Putative bifunctional cytochrome c-type biogenesis protein CcmAE (336 aa).

The interval 1–199 is cytochrome c biogenesis ATP-binding export protein CcmA 2; the sequence is MLEARDLYCE…ADTVRRLALT (199 aa). One can recognise an ABC transporter domain in the interval 2–242; it reads LEARDLYCER…VGQRLRVGGM (241 aa). 34-41 lines the ATP pocket; the sequence is GGNGAGKT. Positions 196 to 336 are cytochrome c-type biogenesis protein CcmE 2; the sequence is LALTTALVLY…PQRVDKDTSS (141 aa). Heme contacts are provided by His-307 and Tyr-311. Residues 307–336 are disordered; sequence HDENYTPPEVEKAMQENHRRPQRVDKDTSS.

The protein in the N-terminal section; belongs to the ABC transporter superfamily. CcmA exporter (TC 3.A.1.107) family. It in the C-terminal section; belongs to the CcmE/CycJ family.

It is found in the cell inner membrane. The catalysed reaction is heme b(in) + ATP + H2O = heme b(out) + ADP + phosphate + H(+). Its function is as follows. Part of the ABC transporter complex CcmAB involved in the biogenesis of c-type cytochromes; once thought to export heme, this seems not to be the case, but its exact role is uncertain. Responsible for energy coupling to the transport system. Heme chaperone required for the biogenesis of c-type cytochromes. Transiently binds heme delivered by CcmC and transfers the heme to apo-cytochromes in a process facilitated by CcmF and CcmH. The protein is Putative bifunctional cytochrome c-type biogenesis protein CcmAE (ccmAE) of Salmonella choleraesuis (strain SC-B67).